Consider the following 122-residue polypeptide: MIQTETYLDVADNSGARRVMCIKVLGGSHRRYAGVGDVIKVTVKEAIPRGKVKKGQVMKAVVVRTKKGVRRPDGSLIRFDDNAAVLLNNQEAPVGTRIFGPVTRELRGEKFMKIISLAPEVL.

Belongs to the universal ribosomal protein uL14 family. As to quaternary structure, part of the 50S ribosomal subunit. Forms a cluster with proteins L3 and L19. In the 70S ribosome, L14 and L19 interact and together make contacts with the 16S rRNA in bridges B5 and B8.

Functionally, binds to 23S rRNA. Forms part of two intersubunit bridges in the 70S ribosome. The polypeptide is Large ribosomal subunit protein uL14 (Teredinibacter turnerae (strain ATCC 39867 / T7901)).